Here is a 348-residue protein sequence, read N- to C-terminus: Dihydroorotase (348 aa).

Residues His-17 and His-19 each contribute to the Zn(2+) site. Substrate is bound by residues 19–21 (HLR) and Asn-45. Lys-103, His-140, and His-178 together coordinate Zn(2+). At Lys-103 the chain carries N6-carboxylysine. His-140 contributes to the substrate binding site. Leu-223 provides a ligand contact to substrate. Residue Asp-251 participates in Zn(2+) binding. Asp-251 is an active-site residue. Substrate-binding residues include His-255 and Ala-267.

It belongs to the metallo-dependent hydrolases superfamily. DHOase family. Class II DHOase subfamily. As to quaternary structure, homodimer. It depends on Zn(2+) as a cofactor.

The enzyme catalyses (S)-dihydroorotate + H2O = N-carbamoyl-L-aspartate + H(+). Its pathway is pyrimidine metabolism; UMP biosynthesis via de novo pathway; (S)-dihydroorotate from bicarbonate: step 3/3. Catalyzes the reversible cyclization of carbamoyl aspartate to dihydroorotate. This Salmonella agona (strain SL483) protein is Dihydroorotase.